The chain runs to 474 residues: tRNA-2-methylthio-N(6)-dimethylallyladenosine synthase (474 aa).

The region spanning 3–120 (KKLHIKTWGC…LPEMIEQVRR (118 aa)) is the MTTase N-terminal domain. [4Fe-4S] cluster-binding residues include C12, C49, C83, C157, C161, and C164. Residues 143–375 (RAEGPTAFVS…QDRITQQAMR (233 aa)) enclose the Radical SAM core domain. Positions 378–441 (RHMMGTVQRI…TNSLRGKFIR (64 aa)) constitute a TRAM domain.

This sequence belongs to the methylthiotransferase family. MiaB subfamily. In terms of assembly, monomer. Requires [4Fe-4S] cluster as cofactor.

The protein localises to the cytoplasm. It catalyses the reaction N(6)-dimethylallyladenosine(37) in tRNA + (sulfur carrier)-SH + AH2 + 2 S-adenosyl-L-methionine = 2-methylsulfanyl-N(6)-dimethylallyladenosine(37) in tRNA + (sulfur carrier)-H + 5'-deoxyadenosine + L-methionine + A + S-adenosyl-L-homocysteine + 2 H(+). Catalyzes the methylthiolation of N6-(dimethylallyl)adenosine (i(6)A), leading to the formation of 2-methylthio-N6-(dimethylallyl)adenosine (ms(2)i(6)A) at position 37 in tRNAs that read codons beginning with uridine. The protein is tRNA-2-methylthio-N(6)-dimethylallyladenosine synthase of Shewanella oneidensis (strain ATCC 700550 / JCM 31522 / CIP 106686 / LMG 19005 / NCIMB 14063 / MR-1).